Consider the following 1587-residue polypeptide: Mediator of RNA polymerase II transcription subunit 23 (1587 aa).

2 disordered regions span residues serine 1374 to histidine 1484 and glutamine 1567 to histidine 1587. Over residues proline 1385 to valine 1404 the composition is skewed to basic and acidic residues. An acidic region spans residues glutamate 1387 to valine 1404. A compositionally biased stretch (polar residues) spans leucine 1410–leucine 1426. Low complexity predominate over residues proline 1430–histidine 1450. A compositionally biased stretch (polar residues) spans aspartate 1463–histidine 1484. Low complexity predominate over residues glutamine 1567–glutamine 1576. The span at glutamine 1577–histidine 1587 shows a compositional bias: basic residues.

Belongs to the Mediator complex subunit 23 family. In terms of assembly, component of the Mediator complex. Interacts with let-19/mdt-13.

It localises to the nucleus. Functionally, component of the Mediator complex, a coactivator involved in regulated gene transcription of nearly all RNA polymerase II-dependent genes. Mediator functions as a bridge to convey information from gene-specific regulatory proteins to the basal RNA polymerase II transcription machinery. Mediator is recruited to promoters by direct interactions with regulatory proteins and serves as a scaffold for the assembly of a functional pre-initiation complex with RNA polymerase II and the general transcription factors. Functions downstream of receptor let-23 and let-60/Ras during vulval induction likely by down-regulating the expression of phosphatase dep-1 and lin-12/Notch in vulva precursor cell descendants with a primary cell fate. Acts to repress beta-catenin target genes. Required for asymmetric division of T-cells. Plays a role in responses to M.nematophilum-mediated bacterial infection by promoting tail swelling and preventing constipation. The protein is Mediator of RNA polymerase II transcription subunit 23 (sur-2) of Caenorhabditis elegans.